Reading from the N-terminus, the 85-residue chain is Large ribosomal subunit protein bL31B (85 aa).

Belongs to the bacterial ribosomal protein bL31 family. Type B subfamily. As to quaternary structure, part of the 50S ribosomal subunit.

The chain is Large ribosomal subunit protein bL31B from Clavibacter sepedonicus (Clavibacter michiganensis subsp. sepedonicus).